Reading from the N-terminus, the 255-residue chain is Putative gene 39 protein (255 aa).

This is Putative gene 39 protein (39) from Bacillus phage SP01 (Bacteriophage SP01).